The sequence spans 152 residues: Ferredoxin-thioredoxin reductase catalytic chain, chloroplastic (152 aa).

The transit peptide at 1–38 (MTSTVTTTVGCGGLPVRPLSTATRGRPRRCAVRAQAAG) directs the protein to the chloroplast. [4Fe-4S] cluster is bound at residue C91. C93 (nucleophile) is an active-site residue. C93 and C123 are disulfide-bonded. The [4Fe-4S] cluster site is built by C110, C112, and C121.

The protein belongs to the ferredoxin thioredoxin reductase beta subunit family. Heterodimer of subunit A (variable subunit) and subunit B (catalytic subunit). Heterodimeric FTR forms a complex with ferredoxin and thioredoxin. Requires [4Fe-4S] cluster as cofactor.

The protein resides in the plastid. Its subcellular location is the chloroplast. The enzyme catalyses [thioredoxin]-disulfide + 2 reduced [2Fe-2S]-[ferredoxin] + 2 H(+) = [thioredoxin]-dithiol + 2 oxidized [2Fe-2S]-[ferredoxin]. Catalytic subunit of the ferredoxin-thioredoxin reductase (FTR), which catalyzes the two-electron reduction of thioredoxins by the electrons provided by reduced ferredoxin. The sequence is that of Ferredoxin-thioredoxin reductase catalytic chain, chloroplastic (FTRC) from Zea mays (Maize).